Consider the following 207-residue polypeptide: Octanoyltransferase (207 aa).

The region spanning A27 to A203 is the BPL/LPL catalytic domain. Substrate is bound by residues R66–H73, S133–G135, and G146–A148. Residue C164 is the Acyl-thioester intermediate of the active site.

It belongs to the LipB family.

It is found in the cytoplasm. It carries out the reaction octanoyl-[ACP] + L-lysyl-[protein] = N(6)-octanoyl-L-lysyl-[protein] + holo-[ACP] + H(+). The protein operates within protein modification; protein lipoylation via endogenous pathway; protein N(6)-(lipoyl)lysine from octanoyl-[acyl-carrier-protein]: step 1/2. Catalyzes the transfer of endogenously produced octanoic acid from octanoyl-acyl-carrier-protein onto the lipoyl domains of lipoate-dependent enzymes. Lipoyl-ACP can also act as a substrate although octanoyl-ACP is likely to be the physiological substrate. This chain is Octanoyltransferase, found in Neisseria meningitidis serogroup B (strain ATCC BAA-335 / MC58).